Here is an 865-residue protein sequence, read N- to C-terminus: MVASARVQKLVRRYKLAIATALAILLLQGLVVWSFSGLEEDEAGEKGRQRKPRPLDPGEGSKDTDSSAGRRGSTGRRHGRWRGRAESPGVPVAKVVRAVTSRQRASRRVPPAPPPEAPGRQNLSGAAAGEALVGAAGFPPHGDTGSVEGAPQPTDNGFTPKCEIVGKDALSALARASTKQCQQEIANVVCLHQAGSLMPKAVPRHCQLTGKMSPGIQWDESQAQQPMDGPPVRIAYMLVVHGRAIRQLKRLLKAVYHEQHFFYIHVDKRSNYLHREVVELAQGYDNVRVTPWRMVTIWGGASLLTMYLRSMRDLLEVPGWAWDFFINLSATDYPTRTNEELVAFLSKNRDKNFLKSHGRDNSRFIKKQGLDRLFHECDSHMWRLGERQIPAGIVVDGGSDWFVLTRSFVEYVVYTDDPLVAQLRQFYTYTLLPAESFFHTVLENSLACETLVDNNLRVTNWNRKLGCKCQYKHIVDWCGCSPNDFKPQDFLRLQQVSRPTFFARKFESTVNQEVLEILDFHLYGSYPPGTPALKAYWENTYDAADGPSGLSDVMLTAYTAFARLSLHHAATAAPPMGTPLCRFEPRGLPSSVHLYFYDDHFQGYLVTQAAQPSAQGPAEMLEMWLMPQGSLKLLGRSDQASRLQSLEVGTDWDPKERLFRNFGGLLGPLDEPVAVQRWARGPNLTATVVWIDPTYVVATSYDITVDTETEVTQYKPPLSRPLRPGPWTVRLLQFWEPLGETRFLVLPLTFNRKLPLRKDDASWLHAGPPHNEYMEQSFQGLSSILNLPQPELAEEAAQRHTQLTGPALEAWTDRELSSFWSVAGLCAIGPSPCPSLEPCRLTSWSSLSPDPKSELGPVKADGRLR.

At 1-15 the chain is on the cytoplasmic side; the sequence is MVASARVQKLVRRYK. A helical; Signal-anchor for type II membrane protein transmembrane segment spans residues 16-36; that stretch reads LAIATALAILLLQGLVVWSFS. At 37–865 the chain is on the lumenal side; it reads GLEEDEAGEK…GPVKADGRLR (829 aa). The disordered stretch occupies residues 41-157; the sequence is DEAGEKGRQR…EGAPQPTDNG (117 aa). Residues 53 to 65 show a composition bias toward basic and acidic residues; it reads RPLDPGEGSKDTD. A compositionally biased stretch (basic residues) spans 73-82; it reads STGRRHGRWR. Residue Asn122 is glycosylated (N-linked (GlcNAc...) asparagine). Low complexity predominate over residues 125–137; it reads GAAAGEALVGAAG. Intrachain disulfides connect Cys162–Cys190, Cys206–Cys448, Cys467–Cys480, and Cys469–Cys478. Residues Val239, Asp267, and 296–298 contribute to the UDP-alpha-D-xylose site; that span reads TIW. The N-linked (GlcNAc...) asparagine glycan is linked to Asn327. Residue 400-401 coordinates UDP-alpha-D-xylose; that stretch reads DW. UDP-alpha-D-xylose contacts are provided by residues Ser481 and 504–505; that span reads RK. Disulfide bonds link Cys581–Cys833 and Cys826–Cys839. N-linked (GlcNAc...) asparagine glycosylation is present at Asn683. Residues 846–865 are disordered; sequence SLSPDPKSELGPVKADGRLR.

It belongs to the glycosyltransferase 14 family. XylT subfamily. As to quaternary structure, monomer. It depends on Mg(2+) as a cofactor. Mn(2+) serves as cofactor. Contains disulfide bonds.

It is found in the golgi apparatus membrane. The protein localises to the secreted. The catalysed reaction is UDP-alpha-D-xylose + L-seryl-[protein] = 3-O-(beta-D-xylosyl)-L-seryl-[protein] + UDP + H(+). Its pathway is glycan metabolism; chondroitin sulfate biosynthesis. It functions in the pathway glycan metabolism; heparan sulfate biosynthesis. Functionally, catalyzes the first step in the biosynthesis of chondroitin sulfate, heparan sulfate and dermatan sulfate proteoglycans, such as DCN. Transfers D-xylose from UDP-D-xylose to specific serine residues of the core protein. The polypeptide is Xylosyltransferase 2 (XYLT2) (Pan troglodytes (Chimpanzee)).